A 702-amino-acid chain; its full sequence is DNA ligase (702 aa).

Residues 32 to 36 (DAEYD) and 81 to 82 (SL) each bind NAD(+). Positions 104–125 (AESSAQKASLNPLVRDSDQKNR) are disordered. Position 139 (glutamate 139) interacts with NAD(+). Lysine 141 serves as the catalytic N6-AMP-lysine intermediate. Residues arginine 162, glutamate 199, lysine 316, and lysine 340 each coordinate NAD(+). 4 residues coordinate Zn(2+): cysteine 434, cysteine 437, cysteine 452, and cysteine 458. The region spanning 616–702 (KPNHPFRDKT…KALKPEGTKV (87 aa)) is the BRCT domain.

The protein belongs to the NAD-dependent DNA ligase family. LigA subfamily. It depends on Mg(2+) as a cofactor. The cofactor is Mn(2+).

It catalyses the reaction NAD(+) + (deoxyribonucleotide)n-3'-hydroxyl + 5'-phospho-(deoxyribonucleotide)m = (deoxyribonucleotide)n+m + AMP + beta-nicotinamide D-nucleotide.. Functionally, DNA ligase that catalyzes the formation of phosphodiester linkages between 5'-phosphoryl and 3'-hydroxyl groups in double-stranded DNA using NAD as a coenzyme and as the energy source for the reaction. It is essential for DNA replication and repair of damaged DNA. The polypeptide is DNA ligase (Hamiltonella defensa subsp. Acyrthosiphon pisum (strain 5AT)).